The primary structure comprises 430 residues: T-kininogen 2 (430 aa).

A signal peptide spans 1-18 (MKLITILLLCSRLLPSLA). Gln-19 is subject to Pyrrolidone carboxylic acid. In terms of domain architecture, Cystatin kininogen-type 1 spans 28–131 (CNDETVFQAV…TQICNITPGK (104 aa)). 9 disulfides stabilise this stretch: Cys-28–Cys-404, Cys-83–Cys-94, Cys-107–Cys-125, Cys-141–Cys-144, Cys-205–Cys-217, Cys-228–Cys-247, Cys-263–Cys-266, Cys-327–Cys-339, and Cys-350–Cys-369. The N-linked (GlcNAc...) asparagine glycan is linked to Asn-82. A Cystatin kininogen-type 2 domain is found at 150–253 (MDSSDLKPVL…SQSCDLYPGD (104 aa)). Asn-168 and Asn-204 each carry an N-linked (GlcNAc...) asparagine glycan. The region spanning 272–375 (VDSPELKEAL…TVRCQALDMM (104 aa)) is the Cystatin kininogen-type 3 domain. N-linked (GlcNAc...) asparagine glycosylation is present at Asn-326. The tract at residues 410–430 (LSKAGAGPAPDHQAEASTVTP) is disordered.

As T-kinin is preceded by a Met instead of an Arg or Lys, it is not released from its precursor by either tissue or plasma kallikrein. As to expression, plasma.

The protein localises to the secreted. Its subcellular location is the extracellular space. Kininogens are plasma glycoproteins with a number of functions: (1) as precursor of the active peptide bradykinin they effect smooth muscle contraction, induction of hypotension and increase of vascular permeability. (2) They play a role in blood coagulation by helping to position optimally prekallikrein and factor XI next to factor XII. (3) They are inhibitor of thiol proteases. The chain is T-kininogen 2 from Rattus norvegicus (Rat).